The sequence spans 69 residues: Small, acid-soluble spore protein C1 (69 aa).

Belongs to the alpha/beta-type SASP family.

Functionally, SASP are bound to spore DNA. They are double-stranded DNA-binding proteins that cause DNA to change to an a-like conformation. They protect the DNA backbone from chemical and enzymatic cleavage and are thus involved in dormant spore's high resistance to UV light. The chain is Small, acid-soluble spore protein C1 (SASP-C1) from Priestia megaterium (Bacillus megaterium).